Consider the following 481-residue polypeptide: Zinc metalloproteinase/disintegrin (481 aa).

The N-terminal stretch at 1–20 (MIQVLLVTICLAVFPYQGSS) is a signal peptide. Residues 21-190 (IILESGNVDD…KASQLYLTPE (170 aa)) constitute a propeptide that is removed on maturation. Residues 197–392 (RYIKLAIVVD…DNPQCILNAP (196 aa)) form the Peptidase M12B domain. 3 disulfide bridges follow: Cys308-Cys387, Cys349-Cys371, and Cys351-Cys354. His333 is a binding site for Zn(2+). Residue Glu334 is part of the active site. His337 and His343 together coordinate Zn(2+). The propeptide occupies 393–408 (LRTDTVSTPVSGNEFL). One can recognise a Disintegrin domain in the interval 400–481 (TPVSGNEFLE…ADCPRNGLYS (82 aa)). Intrachain disulfides connect Cys414/Cys429, Cys416/Cys424, Cys423/Cys446, Cys437/Cys443, Cys442/Cys467, and Cys455/Cys474. A Cell attachment site motif is present at residues 459-461 (RGD).

The protein belongs to the venom metalloproteinase (M12B) family. P-II subfamily. P-IIa sub-subfamily. Monomer. It depends on Zn(2+) as a cofactor. In terms of tissue distribution, expressed by the venom gland.

Its subcellular location is the secreted. In terms of biological role, impairs hemostasis in the envenomed animal. Its function is as follows. Inhibits platelet aggregation induced by ADP, thrombin, platelet-activating factor and collagen. Acts by inhibiting fibrinogen interaction with platelet receptors GPIIb/GPIIIa (ITGA2B/ITGB3). This chain is Zinc metalloproteinase/disintegrin, found in Protobothrops elegans (Elegant pitviper).